The primary structure comprises 290 residues: 3-deoxy-manno-octulosonate cytidylyltransferase, mitochondrial (290 aa).

A mitochondrion-targeting transit peptide spans methionine 1–proline 50.

Belongs to the KdsB family. Requires Mg(2+) as cofactor. Expressed in roots, leaves, stems and siliques.

The protein localises to the mitochondrion outer membrane. It catalyses the reaction 3-deoxy-alpha-D-manno-oct-2-ulosonate + CTP = CMP-3-deoxy-beta-D-manno-octulosonate + diphosphate. Its pathway is nucleotide-sugar biosynthesis; CMP-3-deoxy-D-manno-octulosonate biosynthesis; CMP-3-deoxy-D-manno-octulosonate from 3-deoxy-D-manno-octulosonate and CTP: step 1/1. Its activity is regulated as follows. Inhibited by 2beta-deoxy-Kdo. In terms of biological role, catalyzes the production of the sugar nucleotide CMP-3-deoxy-D-manno-octulosonate (CMP-KDO). CTP is the preferred nucleotide donor, but it can partially be replaced with UTP. Activates KDO during the biosynthesis of rhamnogalacturonan II (RG-II), a structurally complex pectic polysaccharide of the primary cell wall. RG-II is essential for the cell wall integrity of rapidly growing tissues and pollen tube growth and elongation. This Arabidopsis thaliana (Mouse-ear cress) protein is 3-deoxy-manno-octulosonate cytidylyltransferase, mitochondrial.